Consider the following 1347-residue polypeptide: Protocadherin-11 X-linked (1347 aa).

An N-terminal signal peptide occupies residues 1–23 (MDLLSGTYIFAVLLACVVFHSGA). Topologically, residues 24-812 (QEKNYTIREE…VSSPTNDYVK (789 aa)) are extracellular. Cadherin domains follow at residues 26 to 139 (KNYT…APLF), 140 to 249 (PATV…HPVF), 250 to 355 (KETE…VPSI), 362 to 466 (NPVN…APVF), 467 to 570 (TQSF…SPVF), 571 to 673 (THNE…KPVF), and 677 to 795 (PSNY…APVT). Residues Asn-27, Asn-48, and Asn-54 are each glycosylated (N-linked (GlcNAc...) asparagine). A glycan (N-linked (GlcNAc...) asparagine) is linked at Asn-344. A glycan (N-linked (GlcNAc...) asparagine) is linked at Asn-553. An N-linked (GlcNAc...) asparagine glycan is attached at Asn-773. Residues 813 to 833 (ILVAAVAGTITVVVVIFITAV) form a helical membrane-spanning segment. Topologically, residues 834-1347 (VRCRQAPHLK…DSPIMEEHPL (514 aa)) are cytoplasmic. 3 disordered regions span residues 1057–1091 (LPEG…GYPQ), 1097–1116 (RATP…ESTF), and 1326–1347 (FTPR…EHPL).

The protein localises to the cell membrane. Potential calcium-dependent cell-adhesion protein. The chain is Protocadherin-11 X-linked (PCDH11X) from Gorilla gorilla gorilla (Western lowland gorilla).